The primary structure comprises 767 residues: Cation/H(+) antiporter 27 (767 aa).

The next 11 membrane-spanning stretches (helical) occupy residues 39-59 (LPLLLLQISVFSIFSVSFQFL), 63-83 (FGKFAFLTQMLAGICLGPSVI), 99-119 (VYIIESFEAICFLFICYITTC), 135-155 (INGILLFLIPFVWGQFAAILI), 173-193 (HVAIVQSTMFFQVVYGVLSSL), 205-225 (LASMMVHDCLSWCFFMLNIAI), 242-262 (VLQMIMILVIAYVFRPLMLWM), 280-300 (ICVLLFISCLWAEFVGLPYFF), 323-343 (IGCFVWSVLMPCYVIGIGLNI), 371-391 (IALPSLYYKVPLWHAILVGFI), and 415-435 (KSFGAMVMSATVNSTIFIVIV).

The protein belongs to the monovalent cation:proton antiporter 2 (CPA2) transporter (TC 2.A.37) family. CHX (TC 2.A.37.4) subfamily. In terms of tissue distribution, specifically expressed in pollen.

It is found in the membrane. Functionally, may operate as a cation/H(+) antiporter. The polypeptide is Cation/H(+) antiporter 27 (CHX27) (Arabidopsis thaliana (Mouse-ear cress)).